We begin with the raw amino-acid sequence, 432 residues long: MQVTVETKEGLERVLTITVPAANIEDAVNAELRNIAKNRRFDGFRKGKVPMKMVAKMYGSAVRHDKMGEVMQRHFIEAIVKDKINPAGAPTFAPVEFAEGQDLVFTATFEIYPEVTLQGLDKVVVEKPQVEVKDEDVAEMLETLRKQQATWSDADVAAEDGTRATINFVGSIDGELFEGGKADNFPLEMGQGRMIPGFEDGIKGKKAGDELTINVNFPEDYHAENLKGKAAEFAITVVKVEARELPEMNDEFVTKFGAQGGVEGLKTEVRKNMERELAQTVKNKIKEQAINGLVEQNNIDVPSALIDQEVQVLRQQAVQRFGGNADSAPELPRELFEEQAKRRVVVGLLLGEVIKTEELKADDEKVKALINEMASAYEDPTEVVAYYEGNEQMMNNMRNVALEEQAIDAILAKAQVSEKAVGFNELMNQQPA.

Residues 161-246 (GTRATINFVG…VVKVEARELP (86 aa)) form the PPIase FKBP-type domain.

Belongs to the FKBP-type PPIase family. Tig subfamily.

It localises to the cytoplasm. It carries out the reaction [protein]-peptidylproline (omega=180) = [protein]-peptidylproline (omega=0). Functionally, involved in protein export. Acts as a chaperone by maintaining the newly synthesized protein in an open conformation. Functions as a peptidyl-prolyl cis-trans isomerase. The polypeptide is Trigger factor (Aliivibrio salmonicida (strain LFI1238) (Vibrio salmonicida (strain LFI1238))).